The chain runs to 165 residues: Large ribosomal subunit protein uL11 (165 aa).

At S38 the chain carries Phosphoserine. K40 participates in a covalent cross-link: Glycyl lysine isopeptide (Lys-Gly) (interchain with G-Cter in SUMO2). K48 is covalently cross-linked (Glycyl lysine isopeptide (Lys-Gly) (interchain with G-Cter in ubiquitin)). N6-acetyllysine is present on K54. A Glycyl lysine isopeptide (Lys-Gly) (interchain with G-Cter in ubiquitin) cross-link involves residue K83. Residue S165 is modified to Phosphoserine.

This sequence belongs to the universal ribosomal protein uL11 family. Component of the large ribosomal subunit. Mature ribosomes consist of a small (40S) and a large (60S) subunit. The 40S subunit contains about 33 different proteins and 1 molecule of RNA (18S). The 60S subunit contains about 49 different proteins and 3 molecules of RNA (28S, 5.8S and 5S). Post-translationally, ubiquitinated at Lys-48 and Lys-83 by RNF14 and RNF25 in response to ribosome collisions (ribosome stalling).

It is found in the cytoplasm. Its function is as follows. Component of the large ribosomal subunit. The ribosome is a large ribonucleoprotein complex responsible for the synthesis of proteins in the cell. Binds directly to 26S ribosomal RNA. The protein is Large ribosomal subunit protein uL11 (Rpl12) of Rattus norvegicus (Rat).